A 318-amino-acid chain; its full sequence is Gamma-glutamyl hydrolase (318 aa).

Positions 1 to 24 are cleaved as a signal peptide; sequence MASPGCLLCVLGLLLCGAASLELS. Residues 25-318 form the Gamma-glutamyl hydrolase domain; it reads RPHGDTAKKP…SSFQQCYIFD (294 aa). The N-linked (GlcNAc...) asparagine glycan is linked to Asn116. Cys134 (nucleophile) is an active-site residue. Asn163 and Asn203 each carry an N-linked (GlcNAc...) asparagine glycan. His244 acts as the Proton donor in catalysis. N-linked (GlcNAc...) asparagine; partial glycosylation is present at Asn307.

Belongs to the peptidase C26 family. In terms of assembly, homodimer.

The protein localises to the secreted. Its subcellular location is the extracellular space. It is found in the lysosome. It localises to the melanosome. It catalyses the reaction (6S)-5,6,7,8-tetrahydrofolyl-(gamma-L-Glu)(n) + (n-1) H2O = (6S)-5,6,7,8-tetrahydrofolate + (n-1) L-glutamate. Its function is as follows. Hydrolyzes the polyglutamate sidechains of pteroylpolyglutamates. Progressively removes gamma-glutamyl residues from pteroylpoly-gamma-glutamate to yield pteroyl-alpha-glutamate (folic acid) and free glutamate. May play an important role in the bioavailability of dietary pteroylpolyglutamates and in the metabolism of pteroylpolyglutamates and antifolates. The protein is Gamma-glutamyl hydrolase of Homo sapiens (Human).